Reading from the N-terminus, the 1037-residue chain is Sentrin-specific protease 7 (1037 aa).

Residues methionine 1–arginine 10 show a composition bias toward basic residues. 2 disordered regions span residues methionine 1 to alanine 27 and serine 185 to serine 399. 3 positions are modified to phosphoserine: serine 12, serine 13, and serine 25. Residues serine 192–serine 208 show a composition bias toward low complexity. Residues glycine 272–tyrosine 282 are compositionally biased toward polar residues. A compositionally biased stretch (basic residues) spans valine 290–serine 300. Basic and acidic residues-rich tracts occupy residues asparagine 301–glutamate 321 and valine 328–glutamine 341. Low complexity predominate over residues alanine 379–serine 399. Residues serine 434 and serine 435 each carry the phosphoserine modification. The tract at residues leucine 747–cysteine 1037 is protease. The active site involves histidine 847. The interval glutamine 873 to asparagine 909 is disordered. Residues glutamine 880–proline 890 are compositionally biased toward basic and acidic residues. The segment covering histidine 891 to asparagine 909 has biased composition (polar residues). The active site involves aspartate 926. Catalysis depends on cysteine 979, which acts as the Nucleophile.

It belongs to the peptidase C48 family.

The protein resides in the cytoplasm. Its function is as follows. Protease that acts as a positive regulator of the cGAS-STING pathway by catalyzing desumoylation of CGAS. Desumoylation of CGAS promotes DNA-binding activity of CGAS, subsequent oligomerization and activation. Deconjugates SUMO2 and SUMO3 from targeted proteins, but not SUMO1. Catalyzes the deconjugation of poly-SUMO2 and poly-SUMO3 chains. Has very low efficiency in processing full-length SUMO proteins to their mature forms. The chain is Sentrin-specific protease 7 from Mus musculus (Mouse).